We begin with the raw amino-acid sequence, 706 residues long: Parasporal crystal protein Cry18Aa (706 aa).

Belongs to the delta endotoxin family.

Binds to the brush border membrane vesicles of scarab larvae and somehow damages the gut wall to allow the vegetative cells of P.popilliae to enter the hemolymph. Active on M.melolontha. The polypeptide is Parasporal crystal protein Cry18Aa (cry18Aa) (Paenibacillus popilliae (Bacillus popilliae)).